The following is a 488-amino-acid chain: Glutamyl-tRNA(Gln) amidotransferase subunit A (488 aa).

Residues K77 and S152 each act as charge relay system in the active site. Catalysis depends on S176, which acts as the Acyl-ester intermediate.

It belongs to the amidase family. GatA subfamily. Heterotrimer of A, B and C subunits.

It carries out the reaction L-glutamyl-tRNA(Gln) + L-glutamine + ATP + H2O = L-glutaminyl-tRNA(Gln) + L-glutamate + ADP + phosphate + H(+). Functionally, allows the formation of correctly charged Gln-tRNA(Gln) through the transamidation of misacylated Glu-tRNA(Gln) in organisms which lack glutaminyl-tRNA synthetase. The reaction takes place in the presence of glutamine and ATP through an activated gamma-phospho-Glu-tRNA(Gln). This chain is Glutamyl-tRNA(Gln) amidotransferase subunit A, found in Streptococcus gordonii (strain Challis / ATCC 35105 / BCRC 15272 / CH1 / DL1 / V288).